We begin with the raw amino-acid sequence, 185 residues long: ATP synthase subunit b, chloroplastic (185 aa).

A helical membrane pass occupies residues 31–53 (IINITVVLGILIYFGKGVLSNLL).

It belongs to the ATPase B chain family. In terms of assembly, F-type ATPases have 2 components, F(1) - the catalytic core - and F(0) - the membrane proton channel. F(1) has five subunits: alpha(3), beta(3), gamma(1), delta(1), epsilon(1). F(0) has four main subunits: a(1), b(1), b'(1) and c(10-14). The alpha and beta chains form an alternating ring which encloses part of the gamma chain. F(1) is attached to F(0) by a central stalk formed by the gamma and epsilon chains, while a peripheral stalk is formed by the delta, b and b' chains.

The protein resides in the plastid. Its subcellular location is the chloroplast thylakoid membrane. Its function is as follows. F(1)F(0) ATP synthase produces ATP from ADP in the presence of a proton or sodium gradient. F-type ATPases consist of two structural domains, F(1) containing the extramembraneous catalytic core and F(0) containing the membrane proton channel, linked together by a central stalk and a peripheral stalk. During catalysis, ATP synthesis in the catalytic domain of F(1) is coupled via a rotary mechanism of the central stalk subunits to proton translocation. Functionally, component of the F(0) channel, it forms part of the peripheral stalk, linking F(1) to F(0). This is ATP synthase subunit b, chloroplastic from Gnetum parvifolium (Small-leaved jointfir).